The sequence spans 502 residues: MTEKKYIVALDQGTTSSRAVVMDHDANIISVSQREFEQIYPKPGWVEHDPMEIWATQSSTLVEVLAKADISSDQIAAIGITNQRETTIVWEKETGKPIYNAIVWQCRRTAEICEHLKRDGMEEYIRNNTGLVIDPYFSGTKVKWILDHVEGSRERARRGELLFGTVDTWLIWKMTQGRVHVTDYTNASRTMLFNIHTLDWDDKMLEVLDIPREMLPEVRRSSEVYGQTNIGGKGGTRIPISGIAGDQQAALFGQLCVKEGMAKNTYGTGCFMLMNTGEKAVKSENGLLTTIACGPTGEVNYALEGAVFMAGASIQWLRDEMKLINDAYDSEYFATKVQNTNGVYVVPAFTGLGAPYWDPYARGAIFGLTRGVNANHIIRATLESIAYQTRDVLEAMQADSGIRLHALRVDGGAVANNFLMQFQSDILGTRVERPEVREVTALGAAYLAGLAVGFWQNLDELQEKAVIEREFRPGIETTERNYRYAGWKKAVKRAMAWEEHDE.

T14 provides a ligand contact to ADP. The ATP site is built by T14, T15, and S16. T14 is a binding site for sn-glycerol 3-phosphate. R18 provides a ligand contact to ADP. Residues R84, E85, Y136, and D246 each coordinate sn-glycerol 3-phosphate. 5 residues coordinate glycerol: R84, E85, Y136, D246, and Q247. 2 residues coordinate ADP: T268 and G311. 4 residues coordinate ATP: T268, G311, Q315, and G412. ADP-binding residues include G412 and N416.

It belongs to the FGGY kinase family. As to quaternary structure, homotetramer and homodimer (in equilibrium). Heterodimer with EIIA-Glc. Binds 1 zinc ion per glycerol kinase EIIA-Glc dimer. The zinc ion is important for dimerization.

It carries out the reaction glycerol + ATP = sn-glycerol 3-phosphate + ADP + H(+). Its pathway is polyol metabolism; glycerol degradation via glycerol kinase pathway; sn-glycerol 3-phosphate from glycerol: step 1/1. Activity of this regulatory enzyme is affected by several metabolites. Allosterically and non-competitively inhibited by fructose 1,6-bisphosphate (FBP) and unphosphorylated phosphocarrier protein EIIA-Glc (III-Glc), an integral component of the bacterial phosphotransferase (PTS) system. In terms of biological role, key enzyme in the regulation of glycerol uptake and metabolism. Catalyzes the phosphorylation of glycerol to yield sn-glycerol 3-phosphate. The chain is Glycerol kinase from Escherichia coli O127:H6 (strain E2348/69 / EPEC).